The chain runs to 341 residues: Tetraacyldisaccharide 4'-kinase (341 aa).

64–71 contributes to the ATP binding site; sequence AVGGSGKT.

It belongs to the LpxK family.

It catalyses the reaction a lipid A disaccharide + ATP = a lipid IVA + ADP + H(+). It functions in the pathway glycolipid biosynthesis; lipid IV(A) biosynthesis; lipid IV(A) from (3R)-3-hydroxytetradecanoyl-[acyl-carrier-protein] and UDP-N-acetyl-alpha-D-glucosamine: step 6/6. Transfers the gamma-phosphate of ATP to the 4'-position of a tetraacyldisaccharide 1-phosphate intermediate (termed DS-1-P) to form tetraacyldisaccharide 1,4'-bis-phosphate (lipid IVA). The protein is Tetraacyldisaccharide 4'-kinase of Azoarcus sp. (strain BH72).